Reading from the N-terminus, the 177-residue chain is Large ribosomal subunit protein uL6 (177 aa).

Belongs to the universal ribosomal protein uL6 family. Part of the 50S ribosomal subunit.

This protein binds to the 23S rRNA, and is important in its secondary structure. It is located near the subunit interface in the base of the L7/L12 stalk, and near the tRNA binding site of the peptidyltransferase center. This chain is Large ribosomal subunit protein uL6, found in Paracidovorax citrulli (strain AAC00-1) (Acidovorax citrulli).